Reading from the N-terminus, the 788-residue chain is MSTDYSSPAYLQKVDKYWRAANYLSVGQLYLKDNPLLQRPLKASDVKVHPIGHWGTIAGQNFIYAHLNRVINKYGLKMFYVEGPGHGGQVMVSNSYLDGTYTDIYPEITQDVEGMQKLFKQFSFPGGVASHAAPETPGSIHEGGELGYSISHGVGAILDNPDEIAAVVVGDGESETGPLATSWQSTKFINPINDGAVLPILNLNGFKISNPTIFGRTSDEKIKQYFESMNWEPIFVEGDDPEKVHPALAKAMDEAVEKIKAIQKNARENDDATLPVWPMIVFRAPKGWTGPKSWDGDKIEGSFRAHQIPIPVDQTDMEHADALVDWLESYQPKELFNEDGSLKDDIKEIIPTGDARMAANPITNGGVDPKALNLPNFRDYAVDTSKHGANVKQDMIVWSDYLRDVIKKNPDNFRLFGPDETMSNRLYGVFETTNRQWMEDIHPDSDQYEAPAGRVLDAQLSEHQAEGWLEGYVLTGRHGLFASYEAFLRVVDSMLTQHFKWLRKANELDWRKKYPSLNIIAASTVFQQDHNGYTHQDPGALTHLAEKKPEYIREYLPADANSLLAVGDVIFRSQEKINYVVTSKHPRQQWFSIEEAKQLVDNGLGIIDWASTDQGSEPDIVFAAAGTEPTLETLAAIQLLHDSFPDMKIRFVNVVDILKLRSPEKDPRGLSDAEFDHYFTKDKPVVFAFHGYEDLVRDIFFDRHNHNLHVHGYRENGDITTPFDVRVMNQMDRFDLAKSAIAAQPAMENTGAAFVQDMDNMLAKHNAYIRDAGTDLPEVNDWQWKGLK.

The protein belongs to the XFP family. In terms of assembly, homohexamer. The cofactor is thiamine diphosphate.

The catalysed reaction is D-xylulose 5-phosphate + phosphate = acetyl phosphate + D-glyceraldehyde 3-phosphate + H2O. This is Xylulose-5-phosphate phosphoketolase (xpkA) from Lactiplantibacillus pentosus (Lactobacillus pentosus).